We begin with the raw amino-acid sequence, 89 residues long: Probable oxaloacetate decarboxylase gamma chain (89 aa).

A helical membrane pass occupies residues 13-33; that stretch reads LMLSGMGFVITFLLILIWAIT.

This sequence belongs to the OadG family. In terms of assembly, heterotrimer of an alpha, a beta and a gamma subunit. Requires Na(+) as cofactor.

It is found in the cell membrane. The enzyme catalyses oxaloacetate + 2 Na(+)(in) + H(+) = pyruvate + 2 Na(+)(out) + CO2. Its function is as follows. Catalyzes the decarboxylation of oxaloacetate coupled to Na(+) translocation. The sequence is that of Probable oxaloacetate decarboxylase gamma chain from Actinobacillus succinogenes (strain ATCC 55618 / DSM 22257 / CCUG 43843 / 130Z).